Here is a 358-residue protein sequence, read N- to C-terminus: B3 domain-containing protein Os12g0592300 (358 aa).

Residues 25–122 (RIRFFRLMTG…SFDVLIFDAS (98 aa)) constitute a DNA-binding region (TF-B3 1). The disordered stretch occupies residues 148–215 (YHLSDSEDTS…EKSDDDDEHA (68 aa)). A compositionally biased stretch (polar residues) spans 156–181 (TSTPSTFLVGSPHKASTSKKLNGKTK). Positions 203–215 (IEEEKSDDDDEHA) are enriched in acidic residues. A DNA-binding region (TF-B3 2) is located at residues 252-350 (FVTVLQAPQI…TMTVHVIGKV (99 aa)).

Its subcellular location is the nucleus. This Oryza sativa subsp. japonica (Rice) protein is B3 domain-containing protein Os12g0592300.